The primary structure comprises 326 residues: Putative F-box protein At3g22710 (326 aa).

One can recognise an F-box domain in the interval Met-1–Ala-50.

In Arabidopsis thaliana (Mouse-ear cress), this protein is Putative F-box protein At3g22710.